A 198-amino-acid polypeptide reads, in one-letter code: Small ribosomal subunit protein eS1 (198 aa).

It belongs to the eukaryotic ribosomal protein eS1 family.

This chain is Small ribosomal subunit protein eS1, found in Nanoarchaeum equitans (strain Kin4-M).